A 256-amino-acid chain; its full sequence is Small ribosomal subunit protein eS1 (256 aa).

The segment covering 1-18 (MAVGKNKRLSKGKKGIKK) has biased composition (basic residues). The segment at 1-20 (MAVGKNKRLSKGKKGIKKRT) is disordered. The residue at position 2 (alanine 2) is an N-acetylalanine; partial.

The protein belongs to the eukaryotic ribosomal protein eS1 family. As to quaternary structure, component of the small ribosomal subunit. Mature ribosomes consist of a small (40S) and a large (60S) subunit. The 40S subunit contains about 33 different proteins and 1 molecule of RNA (18S). The 60S subunit contains about 49 different proteins and 3 molecules of RNA (25S, 5.8S and 5S).

It is found in the cytoplasm. The sequence is that of Small ribosomal subunit protein eS1 (rps1) from Aspergillus flavus (strain ATCC 200026 / FGSC A1120 / IAM 13836 / NRRL 3357 / JCM 12722 / SRRC 167).